We begin with the raw amino-acid sequence, 450 residues long: Folate synthesis bifunctional protein (450 aa).

The segment at 1–166 (MTSWNFVCLS…TFAELAAIYP (166 aa)) is HPPK. The Pterin-binding domain maps to 180-441 (TQIMGIVNIT…QVEGNRRALA (262 aa)). The segment at 182-450 (IMGIVNITDN…AAAAWAGMFV (269 aa)) is DHPS. A Mg(2+)-binding site is contributed by N187. Residues T227, D267, N287, D358, K395, and 429–431 (RVH) contribute to the (7,8-dihydropterin-6-yl)methyl diphosphate site.

It in the C-terminal section; belongs to the DHPS family. The protein in the N-terminal section; belongs to the HPPK family. It depends on Mg(2+) as a cofactor.

The enzyme catalyses 6-hydroxymethyl-7,8-dihydropterin + ATP = (7,8-dihydropterin-6-yl)methyl diphosphate + AMP + H(+). It catalyses the reaction (7,8-dihydropterin-6-yl)methyl diphosphate + 4-aminobenzoate = 7,8-dihydropteroate + diphosphate. Its pathway is cofactor biosynthesis; tetrahydrofolate biosynthesis; 2-amino-4-hydroxy-6-hydroxymethyl-7,8-dihydropteridine diphosphate from 7,8-dihydroneopterin triphosphate: step 4/4. It functions in the pathway cofactor biosynthesis; tetrahydrofolate biosynthesis; 7,8-dihydrofolate from 2-amino-4-hydroxy-6-hydroxymethyl-7,8-dihydropteridine diphosphate and 4-aminobenzoate: step 1/2. In Chlamydia trachomatis serovar D (strain ATCC VR-885 / DSM 19411 / UW-3/Cx), this protein is Folate synthesis bifunctional protein (folKP).